The following is a 656-amino-acid chain: Chaperone protein DnaK (656 aa).

Threonine 204 carries the phosphothreonine; by autocatalysis modification. The interval 607–656 (VYAKKGGAAGAPPGGEAEGEPQAQAGGKKEDVVDAEFEEVKDEKKKDEDK) is disordered. Low complexity predominate over residues 620-632 (GGEAEGEPQAQAG). Residues 647-656 (KDEKKKDEDK) are compositionally biased toward basic and acidic residues.

This sequence belongs to the heat shock protein 70 family.

Its function is as follows. Acts as a chaperone. In Coxiella burnetii (strain CbuK_Q154) (Coxiella burnetii (strain Q154)), this protein is Chaperone protein DnaK.